The primary structure comprises 243 residues: ATP synthase subunit a (243 aa).

The next 8 helical transmembrane spans lie at 28–48 (SSLY…AGVF), 52–72 (VIPG…LGII), 83–103 (YFPL…VGML), 114–134 (HIVV…LIGL), 141–161 (FFAM…MIFL), 177–197 (LTAN…FVYP), 200–220 (LLIS…EVFI), and 221–241 (AMLQ…DSLF).

It belongs to the ATPase A chain family. In terms of assembly, F-type ATPases have 2 components, CF(1) - the catalytic core - and CF(0) - the membrane proton channel. CF(1) has five subunits: alpha(3), beta(3), gamma(1), delta(1), epsilon(1). CF(0) has three main subunits: a(1), b(2) and c(9-12). The alpha and beta chains form an alternating ring which encloses part of the gamma chain. CF(1) is attached to CF(0) by a central stalk formed by the gamma and epsilon chains, while a peripheral stalk is formed by the delta and b chains.

It is found in the cell inner membrane. Functionally, key component of the proton channel; it plays a direct role in the translocation of protons across the membrane. In Neorickettsia sennetsu (strain ATCC VR-367 / Miyayama) (Ehrlichia sennetsu), this protein is ATP synthase subunit a.